We begin with the raw amino-acid sequence, 383 residues long: Dephospho-CoA kinase (383 aa).

The DPCK domain occupies 3–201 (RIGLTGGMGA…RRLVPFERNL (199 aa)). 11 to 16 (GAGKST) is an ATP binding site. The tract at residues 196–383 (PFERNLRAAT…EVAERLLGTV (188 aa)) is UPF0157.

This sequence in the N-terminal section; belongs to the CoaE family. In the C-terminal section; belongs to the UPF0157 (GrpB) family.

Its subcellular location is the cytoplasm. The catalysed reaction is 3'-dephospho-CoA + ATP = ADP + CoA + H(+). It participates in cofactor biosynthesis; coenzyme A biosynthesis; CoA from (R)-pantothenate: step 5/5. Functionally, catalyzes the phosphorylation of the 3'-hydroxyl group of dephosphocoenzyme A to form coenzyme A. In Nocardia farcinica (strain IFM 10152), this protein is Dephospho-CoA kinase.